The chain runs to 267 residues: Phosphatidylglycerol--prolipoprotein diacylglyceryl transferase (267 aa).

Helical transmembrane passes span leucine 20–alanine 40, phenylalanine 57–serine 77, isoleucine 88–valine 108, and phenylalanine 117–isoleucine 137. Residue arginine 139 coordinates a 1,2-diacyl-sn-glycero-3-phospho-(1'-sn-glycerol). Transmembrane regions (helical) follow at residues glutamine 175–leucine 195, glycine 205–leucine 225, and isoleucine 235–leucine 255.

Belongs to the Lgt family.

It is found in the cell membrane. It catalyses the reaction L-cysteinyl-[prolipoprotein] + a 1,2-diacyl-sn-glycero-3-phospho-(1'-sn-glycerol) = an S-1,2-diacyl-sn-glyceryl-L-cysteinyl-[prolipoprotein] + sn-glycerol 1-phosphate + H(+). It participates in protein modification; lipoprotein biosynthesis (diacylglyceryl transfer). In terms of biological role, catalyzes the transfer of the diacylglyceryl group from phosphatidylglycerol to the sulfhydryl group of the N-terminal cysteine of a prolipoprotein, the first step in the formation of mature lipoproteins. This Streptococcus suis (strain 98HAH33) protein is Phosphatidylglycerol--prolipoprotein diacylglyceryl transferase.